A 116-amino-acid chain; its full sequence is Thioredoxin (116 aa).

The Thioredoxin domain maps to 2 to 113 (TDSEKSATIK…LLRELSDVVP (112 aa)). Cysteines 37 and 40 form a disulfide.

The protein belongs to the thioredoxin family.

Its function is as follows. Participates in various redox reactions through the reversible oxidation of its active center dithiol to a disulfide and catalyzes dithiol-disulfide exchange reactions. The sequence is that of Thioredoxin (trxA) from Mycobacterium bovis (strain ATCC BAA-935 / AF2122/97).